An 87-amino-acid polypeptide reads, in one-letter code: Small ribosomal subunit protein bS20 (87 aa).

This sequence belongs to the bacterial ribosomal protein bS20 family.

Its function is as follows. Binds directly to 16S ribosomal RNA. This is Small ribosomal subunit protein bS20 from Beijerinckia indica subsp. indica (strain ATCC 9039 / DSM 1715 / NCIMB 8712).